A 141-amino-acid chain; its full sequence is 3-hydroxyacyl-[acyl-carrier-protein] dehydratase FabZ (141 aa).

H48 is a catalytic residue.

The protein belongs to the thioester dehydratase family. FabZ subfamily.

The protein resides in the cytoplasm. The enzyme catalyses a (3R)-hydroxyacyl-[ACP] = a (2E)-enoyl-[ACP] + H2O. Involved in unsaturated fatty acids biosynthesis. Catalyzes the dehydration of short chain beta-hydroxyacyl-ACPs and long chain saturated and unsaturated beta-hydroxyacyl-ACPs. The polypeptide is 3-hydroxyacyl-[acyl-carrier-protein] dehydratase FabZ (Bacillus subtilis (strain 168)).